We begin with the raw amino-acid sequence, 366 residues long: 2-aminoethylphosphonate--pyruvate transaminase (366 aa).

At lysine 194 the chain carries N6-(pyridoxal phosphate)lysine.

It belongs to the class-V pyridoxal-phosphate-dependent aminotransferase family. PhnW subfamily. As to quaternary structure, homodimer. Requires pyridoxal 5'-phosphate as cofactor.

The enzyme catalyses (2-aminoethyl)phosphonate + pyruvate = phosphonoacetaldehyde + L-alanine. In terms of biological role, involved in phosphonate degradation. In Lactiplantibacillus plantarum (strain ATCC BAA-793 / NCIMB 8826 / WCFS1) (Lactobacillus plantarum), this protein is 2-aminoethylphosphonate--pyruvate transaminase.